The sequence spans 246 residues: MFDIGWSELLVIAVVLIVVVGPKDLPPMIRAFGKTMAGLRKMAGDFRTQFDEALKEADMDDVRQTISDVRNLNPTNSLRDAMNPLRQLGNEIKSDLQKATSPSDGLSSTAAPATSEPVAPLVNVPEPDMKLPDSPPAVAAAPAPVAAASVAAEKPKRARAKSIATVEAEAVAAKPKRVSRSKAVATPETTVATNASEPASPKPTVKTIAKKATVKKIAAEKSVAVADAKPAKAARTKAAKPKKDEA.

The helical transmembrane segment at 1-21 (MFDIGWSELLVIAVVLIVVVG) threads the bilayer. 3 disordered regions span residues 94 to 122 (SDLQKATSPSDGLSSTAAPATSEPVAPLV), 179 to 204 (SRSKAVATPETTVATNASEPASPKPT), and 225 to 246 (VADAKPAKAARTKAAKPKKDEA). Polar residues-rich tracts occupy residues 97–112 (QKATSPSDGLSSTAAP) and 187–197 (PETTVATNASE).

This sequence belongs to the TatB family. The Tat system comprises two distinct complexes: a TatABC complex, containing multiple copies of TatA, TatB and TatC subunits, and a separate TatA complex, containing only TatA subunits. Substrates initially bind to the TatABC complex, which probably triggers association of the separate TatA complex to form the active translocon.

It localises to the cell inner membrane. Its function is as follows. Part of the twin-arginine translocation (Tat) system that transports large folded proteins containing a characteristic twin-arginine motif in their signal peptide across membranes. Together with TatC, TatB is part of a receptor directly interacting with Tat signal peptides. TatB may form an oligomeric binding site that transiently accommodates folded Tat precursor proteins before their translocation. In Agrobacterium fabrum (strain C58 / ATCC 33970) (Agrobacterium tumefaciens (strain C58)), this protein is Sec-independent protein translocase protein TatB.